The primary structure comprises 469 residues: Fe(3+)-Zn(2+) purple acid phosphatase 12 (469 aa).

The N-terminal stretch at 1 to 28 (MSSRSDLKIKRVSLIIFLLSVLVEFCYG) is a signal peptide. The N-linked (GlcNAc...) asparagine glycan is linked to N114. D168 contacts Fe cation. N-linked (GlcNAc...) asparagine glycosylation occurs at N176. Positions 197 and 200 each coordinate Fe cation. D197 is a Zn(2+) binding site. A Zn(2+)-binding site is contributed by N234. N234 contacts substrate. N307 carries an N-linked (GlcNAc...) asparagine glycan. H319 lines the Zn(2+) pocket. The active-site Proton donor is H329. H356 is a Zn(2+) binding site. Position 356-358 (356-358 (HVH)) interacts with substrate. H358 provides a ligand contact to Fe cation. An N-linked (GlcNAc...) asparagine glycan is attached at N429.

It belongs to the metallophosphoesterase superfamily. Purple acid phosphatase family. In terms of assembly, homodimer; disulfide-linked. Fe cation is required as a cofactor. It depends on Zn(2+) as a cofactor. In terms of tissue distribution, expressed in roots, stems, leaves, flowers and siliques.

Its subcellular location is the secreted. It carries out the reaction a phosphate monoester + H2O = an alcohol + phosphate. The polypeptide is Fe(3+)-Zn(2+) purple acid phosphatase 12 (PAP12) (Arabidopsis thaliana (Mouse-ear cress)).